Here is a 311-residue protein sequence, read N- to C-terminus: Ribosomal protein L11 methyltransferase (311 aa).

The S-adenosyl-L-methionine site is built by Thr-160, Gly-181, Asp-203, and Asn-246.

It belongs to the methyltransferase superfamily. PrmA family.

The protein resides in the cytoplasm. The enzyme catalyses L-lysyl-[protein] + 3 S-adenosyl-L-methionine = N(6),N(6),N(6)-trimethyl-L-lysyl-[protein] + 3 S-adenosyl-L-homocysteine + 3 H(+). In terms of biological role, methylates ribosomal protein L11. The sequence is that of Ribosomal protein L11 methyltransferase from Macrococcus caseolyticus (strain JCSC5402) (Macrococcoides caseolyticum).